Consider the following 475-residue polypeptide: Ribulose bisphosphate carboxylase large chain (475 aa).

A propeptide spanning residues 1–2 (MS) is cleaved from the precursor. Pro3 carries the post-translational modification N-acetylproline. Lys14 is subject to N6,N6,N6-trimethyllysine. Substrate contacts are provided by Asn123 and Thr173. The active-site Proton acceptor is Lys175. Lys177 lines the substrate pocket. Positions 201, 203, and 204 each coordinate Mg(2+). Lys201 bears the N6-carboxylysine mark. Catalysis depends on His294, which acts as the Proton acceptor. Substrate contacts are provided by Arg295, His327, and Ser379.

This sequence belongs to the RuBisCO large chain family. Type I subfamily. Heterohexadecamer of 8 large chains and 8 small chains; disulfide-linked. The disulfide link is formed within the large subunit homodimers. It depends on Mg(2+) as a cofactor. In terms of processing, the disulfide bond which can form in the large chain dimeric partners within the hexadecamer appears to be associated with oxidative stress and protein turnover.

It is found in the plastid. It localises to the chloroplast. It catalyses the reaction 2 (2R)-3-phosphoglycerate + 2 H(+) = D-ribulose 1,5-bisphosphate + CO2 + H2O. It carries out the reaction D-ribulose 1,5-bisphosphate + O2 = 2-phosphoglycolate + (2R)-3-phosphoglycerate + 2 H(+). RuBisCO catalyzes two reactions: the carboxylation of D-ribulose 1,5-bisphosphate, the primary event in carbon dioxide fixation, as well as the oxidative fragmentation of the pentose substrate in the photorespiration process. Both reactions occur simultaneously and in competition at the same active site. This chain is Ribulose bisphosphate carboxylase large chain, found in Bouvardia ternifolia (Firecrackerbush).